Reading from the N-terminus, the 204-residue chain is Thymidylate kinase (204 aa).

Position 11 to 18 (11 to 18 (GLDKSGKT)) interacts with ATP.

The protein belongs to the thymidylate kinase family.

The enzyme catalyses dTMP + ATP = dTDP + ADP. It participates in pyrimidine metabolism; dTTP biosynthesis. This Bos taurus (Bovine) protein is Thymidylate kinase (TMK).